Consider the following 133-residue polypeptide: uncharacterized protein (133 aa).

This is an uncharacterized protein from Homo sapiens (Human).